The chain runs to 179 residues: Bifunctional protein PyrR (179 aa).

The short motif at 99-111 (VILVDDVLYTGRT) is the PRPP-binding element.

This sequence belongs to the purine/pyrimidine phosphoribosyltransferase family. PyrR subfamily. In terms of assembly, homodimer and homohexamer; in equilibrium.

It catalyses the reaction UMP + diphosphate = 5-phospho-alpha-D-ribose 1-diphosphate + uracil. In terms of biological role, regulates transcriptional attenuation of the pyrimidine nucleotide (pyr) operon by binding in a uridine-dependent manner to specific sites on pyr mRNA. This disrupts an antiterminator hairpin in the RNA and favors formation of a downstream transcription terminator, leading to a reduced expression of downstream genes. Functionally, also displays a weak uracil phosphoribosyltransferase activity which is not physiologically significant. This chain is Bifunctional protein PyrR, found in Limosilactobacillus fermentum (strain NBRC 3956 / LMG 18251) (Lactobacillus fermentum).